Reading from the N-terminus, the 718-residue chain is Protein Hook homolog 3 (718 aa).

The residue at position 1 (methionine 1) is an N-acetylmethionine. Residues 1-164 (MFSVESLERA…QELMSKESPV (164 aa)) are sufficient for interaction with microtubules. Phosphoserine occurs at positions 3 and 6. In terms of domain architecture, Calponin-homology (CH) spans 10–126 (AELCESLLTW…RMLQLILGCA (117 aa)). Coiled-coil stretches lie at residues 167 to 433 (GNDA…VQAQ) and 462 to 667 (EIRE…YIVS). Serine 238 is subject to Phosphoserine. The required for association with Golgi stretch occupies residues 553 to 718 (EKLHEANNEL…PGHVQPATAR (166 aa)). The required for interaction with MSR1 stretch occupies residues 556–718 (HEANNELQKK…PGHVQPATAR (163 aa)). The segment at 682-718 (EDRLASTGSGQSFLARQRQATSSRRSYPGHVQPATAR) is disordered. Phosphoserine occurs at positions 693 and 707. The segment covering 696-707 (ARQRQATSSRRS) has biased composition (low complexity).

The protein belongs to the hook family. In terms of assembly, self-associates. Component of the FTS/Hook/FHIP complex (FHF complex), composed of AKTIP/FTS, FHIP1B, and one or more members of the Hook family of proteins HOOK1, HOOK2, and HOOK3. May interact directly with AKTIP/FTS, HOOK1 and HOOK2. Associates with several subunits of the homotypic vesicular sorting complex (the HOPS complex) including VPS16 and VPS41; these interactions may be indirect. Interacts with MSR1, and this association is stimulated by ligand binding to MSR1. Interacts with microtubules. Part of a tripartite complex with dynein and dynactin, acts an adapter linking the dynein motor complex and dynactin. Interacts with dynein intermediate chain and dynactin (DCTN1). Interacts with CCDC181. Interacts with LRGUK. (Microbial infection) Interacts with Salmonella typhimurium spiC.

Its subcellular location is the cytoplasm. It localises to the cytoskeleton. The protein resides in the golgi apparatus. Its function is as follows. Acts as an adapter protein linking the dynein motor complex to various cargos and converts dynein from a non-processive to a highly processive motor in the presence of dynactin. Facilitates the interaction between dynein and dynactin and activates dynein processivity (the ability to move along a microtubule for a long distance without falling off the track). Predominantly recruits 2 dyneins, which increases both the force and speed of the microtubule motor. Component of the FTS/Hook/FHIP complex (FHF complex). The FHF complex may function to promote vesicle trafficking and/or fusion via the homotypic vesicular protein sorting complex (the HOPS complex). May regulate clearance of endocytosed receptors such as MSR1. Participates in defining the architecture and localization of the Golgi complex. FHF complex promotes the distribution of AP-4 complex to the perinuclear area of the cell. In terms of biological role, (Microbial infection) May serve as a target for the spiC protein from Salmonella typhimurium, which inactivates it, leading to a strong alteration in cellular trafficking. This Homo sapiens (Human) protein is Protein Hook homolog 3.